Consider the following 274-residue polypeptide: NH(3)-dependent NAD(+) synthetase (274 aa).

46-53 (GISGGQDS) provides a ligand contact to ATP. Residue Asp52 participates in Mg(2+) binding. Arg140 is a deamido-NAD(+) binding site. Residue Thr160 coordinates ATP. Glu165 provides a ligand contact to Mg(2+). Positions 173 and 180 each coordinate deamido-NAD(+). ATP-binding residues include Lys189 and Thr211. 260-261 (HK) contacts deamido-NAD(+).

This sequence belongs to the NAD synthetase family. Homodimer.

It catalyses the reaction deamido-NAD(+) + NH4(+) + ATP = AMP + diphosphate + NAD(+) + H(+). It functions in the pathway cofactor biosynthesis; NAD(+) biosynthesis; NAD(+) from deamido-NAD(+) (ammonia route): step 1/1. Catalyzes the ATP-dependent amidation of deamido-NAD to form NAD. Uses ammonia as a nitrogen source. This is NH(3)-dependent NAD(+) synthetase from Streptococcus pyogenes serotype M6 (strain ATCC BAA-946 / MGAS10394).